Here is a 277-residue protein sequence, read N- to C-terminus: Secoisolariciresinol dehydrogenase (277 aa).

NAD(+)-binding positions include 24 to 29, Asp48, Val73, and Asn99; that span reads GGASGI. Ser163 contacts substrate. The active-site Proton donor/acceptor is the Tyr166. Position 170 (Lys170) interacts with NAD(+).

The protein belongs to the short-chain dehydrogenases/reductases (SDR) family. Homotetramer.

The catalysed reaction is (-)-secoisolariciresinol + 2 NAD(+) = (-)-matairesinol + 2 NADH + 2 H(+). Functionally, oxidoreductase involved in lignan biosynthesis. Catalyzes the stereospecific conversion of (-)-secoisolariciresinol to (-)-matairesinol via a lactol intermediate. This chain is Secoisolariciresinol dehydrogenase, found in Forsythia intermedia (Border forsythia).